The sequence spans 200 residues: Sec-independent protein translocase protein TatB (200 aa).

Residues leucine 2–glycine 22 form a helical membrane-spanning segment. The tract at residues lysine 160 to serine 200 is disordered. The segment covering glycine 191 to serine 200 has biased composition (polar residues).

The protein belongs to the TatB family. In terms of assembly, the Tat system comprises two distinct complexes: a TatABC complex, containing multiple copies of TatA, TatB and TatC subunits, and a separate TatA complex, containing only TatA subunits. Substrates initially bind to the TatABC complex, which probably triggers association of the separate TatA complex to form the active translocon.

It is found in the cell inner membrane. Part of the twin-arginine translocation (Tat) system that transports large folded proteins containing a characteristic twin-arginine motif in their signal peptide across membranes. Together with TatC, TatB is part of a receptor directly interacting with Tat signal peptides. TatB may form an oligomeric binding site that transiently accommodates folded Tat precursor proteins before their translocation. The chain is Sec-independent protein translocase protein TatB from Caulobacter vibrioides (strain ATCC 19089 / CIP 103742 / CB 15) (Caulobacter crescentus).